Here is a 222-residue protein sequence, read N- to C-terminus: Vacuolar protein sorting-associated protein 2 homolog 2 (222 aa).

Coiled-coil stretches lie at residues 26-83 (RGIE…AQIR) and 143-222 (SEAI…LRRI). A disordered region spans residues 179–222 (SSAPKGRIATKTAAPPASTAATNKNSESSEVDELEKRLASLRRI). A compositionally biased stretch (low complexity) spans 187–203 (ATKTAAPPASTAATNKN).

This sequence belongs to the SNF7 family. As to quaternary structure, component of the endosomal sorting required for transport complex III (ESCRT-III), composed at least of VPS2, VPS20, VPS24 and VPS32. Interacts with CHMP1A, CHMP1B and VPS60-1.

The protein localises to the endosome. Its function is as follows. Component of the ESCRT-III complex, which is required for multivesicular bodies (MVBs) formation and sorting of endosomal cargo proteins into MVBs. The ESCRT-III complex is probably involved in the concentration of MVB cargo. The sequence is that of Vacuolar protein sorting-associated protein 2 homolog 2 (VPS2.2) from Arabidopsis thaliana (Mouse-ear cress).